The primary structure comprises 648 residues: Threonine--tRNA ligase (648 aa).

Residues 1-61 enclose the TGS domain; sequence MIKITLPDGS…TTDGNLILYT (61 aa). Residues 240–539 form a catalytic region; sequence DHRKLGKELE…LLEHTAGNFP (300 aa). Cys335, His386, and His516 together coordinate Zn(2+).

The protein belongs to the class-II aminoacyl-tRNA synthetase family. In terms of assembly, homodimer. Zn(2+) serves as cofactor.

The protein localises to the cytoplasm. It catalyses the reaction tRNA(Thr) + L-threonine + ATP = L-threonyl-tRNA(Thr) + AMP + diphosphate + H(+). Its function is as follows. Catalyzes the attachment of threonine to tRNA(Thr) in a two-step reaction: L-threonine is first activated by ATP to form Thr-AMP and then transferred to the acceptor end of tRNA(Thr). Also edits incorrectly charged L-seryl-tRNA(Thr). The protein is Threonine--tRNA ligase of Flavobacterium johnsoniae (strain ATCC 17061 / DSM 2064 / JCM 8514 / BCRC 14874 / CCUG 350202 / NBRC 14942 / NCIMB 11054 / UW101) (Cytophaga johnsonae).